The sequence spans 719 residues: Polyribonucleotide nucleotidyltransferase (719 aa).

Residues Asp-507 and Asp-513 each coordinate Mg(2+). Residues 573 to 633 enclose the KH domain; it reads PKLELFSVDP…EQIKAAKDYI (61 aa). The S1 motif domain maps to 658–719; that stretch reads GQEFQGIVKK…NGKISVDLCE (62 aa).

Belongs to the polyribonucleotide nucleotidyltransferase family. It depends on Mg(2+) as a cofactor.

It localises to the cytoplasm. It catalyses the reaction RNA(n+1) + phosphate = RNA(n) + a ribonucleoside 5'-diphosphate. In terms of biological role, involved in mRNA degradation. Catalyzes the phosphorolysis of single-stranded polyribonucleotides processively in the 3'- to 5'-direction. This is Polyribonucleotide nucleotidyltransferase from Campylobacter jejuni subsp. jejuni serotype O:23/36 (strain 81-176).